The primary structure comprises 141 residues: Hemoglobin subunit alpha-A (141 aa).

In terms of domain architecture, Globin spans 1 to 141; that stretch reads VLSASDKANV…VGTVLTAKYR (141 aa). His58 is a binding site for O2. His87 contacts heme b.

It belongs to the globin family. As to quaternary structure, heterotetramer of two alpha chains and two beta chains. Red blood cells.

In terms of biological role, involved in oxygen transport from the lung to the various peripheral tissues. The sequence is that of Hemoglobin subunit alpha-A (HBAA) from Sturnus vulgaris (Starling).